We begin with the raw amino-acid sequence, 377 residues long: Succinyl-diaminopimelate desuccinylase (377 aa).

H67 contacts Zn(2+). D69 is a catalytic residue. D100 contacts Zn(2+). The active-site Proton acceptor is E134. Zn(2+)-binding residues include E135, E163, and H349.

In terms of assembly, homodimer. Requires Zn(2+) as cofactor.

The enzyme catalyses N-succinyl-(2S,6S)-2,6-diaminopimelate + H2O = (2S,6S)-2,6-diaminopimelate + succinate. The protein operates within amino-acid biosynthesis; L-lysine biosynthesis via DAP pathway; LL-2,6-diaminopimelate from (S)-tetrahydrodipicolinate (succinylase route): step 3/3. With respect to regulation, competitively inhibited by L,L-DAP, D,L-DAP, 2-carboxyethylphosphonic acid (CEPA) and 5-mercaptopentanoic acid (MSPA). Succinate is a poor inhibitor. Its function is as follows. Catalyzes the hydrolysis of N-succinyl-L,L-diaminopimelic acid (SDAP), forming succinate and LL-2,6-diaminopimelate (DAP), an intermediate involved in the bacterial biosynthesis of lysine and meso-diaminopimelic acid, an essential component of bacterial cell walls. It can only hydrolyze L,L-N-succinyl-diaminopimelic acid (L,L-SDAP) and is inactive toward D,L-, L,D-, and D,D-SDAP. This chain is Succinyl-diaminopimelate desuccinylase (dapE), found in Haemophilus influenzae (strain ATCC 51907 / DSM 11121 / KW20 / Rd).